We begin with the raw amino-acid sequence, 154 residues long: ORF3b protein (154 aa).

The tract at residues 80–138 is mitochondrial targeting signal; that stretch reads LQTLVLKMLHSSSLTSLLKTHRMCKYTQSTALQELLIQQWIQFMMSRRRLLACLCKHKK. A nucleolar targeting region spans residues 134-154; sequence CKHKKVSTNLCTHSFRKKQVR. Positions 135-153 match the Bipartite nuclear localization signal motif; it reads KHKKVSTNLCTHSFRKKQV.

In terms of assembly, interacts with host RUNX1 isoform b.

The protein localises to the host nucleus. Its subcellular location is the host nucleolus. It localises to the host mitochondrion. In terms of biological role, induces host cell G0/G1 arrest and apoptosis. This is ORF3b protein from Homo sapiens (Human).